A 408-amino-acid polypeptide reads, in one-letter code: Imidazolonepropionase (408 aa).

The Fe(3+) site is built by histidine 73 and histidine 75. Residues histidine 73 and histidine 75 each contribute to the Zn(2+) site. Residues arginine 82, tyrosine 145, and histidine 178 each contribute to the 4-imidazolone-5-propanoate site. Tyrosine 145 contacts N-formimidoyl-L-glutamate. Histidine 243 lines the Fe(3+) pocket. Residue histidine 243 participates in Zn(2+) binding. Glutamine 246 contacts 4-imidazolone-5-propanoate. Aspartate 318 is a Fe(3+) binding site. Aspartate 318 provides a ligand contact to Zn(2+). N-formimidoyl-L-glutamate is bound by residues asparagine 320 and glycine 322. Serine 323 contributes to the 4-imidazolone-5-propanoate binding site.

This sequence belongs to the metallo-dependent hydrolases superfamily. HutI family. Zn(2+) is required as a cofactor. It depends on Fe(3+) as a cofactor.

The protein localises to the cytoplasm. The catalysed reaction is 4-imidazolone-5-propanoate + H2O = N-formimidoyl-L-glutamate. It participates in amino-acid degradation; L-histidine degradation into L-glutamate; N-formimidoyl-L-glutamate from L-histidine: step 3/3. In terms of biological role, catalyzes the hydrolytic cleavage of the carbon-nitrogen bond in imidazolone-5-propanoate to yield N-formimidoyl-L-glutamate. It is the third step in the universal histidine degradation pathway. The sequence is that of Imidazolonepropionase from Shewanella halifaxensis (strain HAW-EB4).